The primary structure comprises 303 residues: Putative S-adenosyl-L-methionine-dependent methyltransferase MAV_4435 (303 aa).

Residues Asp-129 and 158 to 159 each bind S-adenosyl-L-methionine; that span reads DL.

This sequence belongs to the UPF0677 family.

Exhibits S-adenosyl-L-methionine-dependent methyltransferase activity. This Mycobacterium avium (strain 104) protein is Putative S-adenosyl-L-methionine-dependent methyltransferase MAV_4435.